The sequence spans 778 residues: Aerobic respiration control sensor protein ArcB (778 aa).

Topologically, residues 1-25 (MKQIRLLAQYYVDLMMKLGLVRFSM) are cytoplasmic. A helical transmembrane segment spans residues 26-46 (LLALALVVLAIVVQMAVTMVL). Over 47 to 57 (HGQVESIDVIR) the chain is Periplasmic. Residues 58 to 78 (SIFFGLLITPWAVYFLSVVVE) traverse the membrane as a helical segment. Residues 79–778 (QLEESRQRLS…KAWVAKATKK (700 aa)) are Cytoplasmic-facing. A PAS domain is found at 153 to 223 (QSSFLRSFLD…ETDEKVFRHN (71 aa)). Residues 226 to 278 (LTYEQWLDYPDGRKACFEIRKVPYYDRVGKRHGLMGFGRDITERKRYQDALER) form the PAC domain. In terms of domain architecture, Histidine kinase spans 289-507 (TISHELRTPL…TFTLTIHAPS (219 aa)). The residue at position 292 (His-292) is a Phosphohistidine; by autocatalysis. The 117-residue stretch at 527 to 643 (NVLLVEDIEL…ALTAMIKKFW (117 aa)) folds into the Response regulatory domain. Asp-576 carries the 4-aspartylphosphate modification. The HPt domain maps to 678–771 (GPKLITDGLA…RHDVEVLKAW (94 aa)). His-717 bears the Phosphohistidine mark.

Activation requires a sequential transfer of a phosphate group from a His in the primary transmitter domain, to an Asp in the receiver domain and to a His in the secondary transmitter domain.

It localises to the cell inner membrane. It catalyses the reaction ATP + protein L-histidine = ADP + protein N-phospho-L-histidine.. In terms of biological role, member of the two-component regulatory system ArcB/ArcA. Sensor-regulator protein for anaerobic repression of the arc modulon. Activates ArcA via a four-step phosphorelay. ArcB can also dephosphorylate ArcA by a reverse phosphorelay involving His-717 and Asp-576. The polypeptide is Aerobic respiration control sensor protein ArcB (arcB) (Escherichia coli O157:H7).